The primary structure comprises 1131 residues: Phytochrome A (1131 aa).

A disordered region spans residues 1-23 (MSSSRPAHSSSSSSRTRQSSRAR). The region spanning 219-404 (SMEALCNTVV…VFAVHVNKEF (186 aa)) is the GAF domain. Phytochromobilin is bound at residue C324. PAS domains follow at residues 620–690 (VTSE…LQGR) and 750–834 (VEGD…LAGE). The 221-residue stretch at 904-1124 (YMRHAINKPL…TFILTAELAA (221 aa)) folds into the Histidine kinase domain.

It belongs to the phytochrome family. In terms of assembly, homodimer. In terms of processing, contains one covalently linked phytochromobilin chromophore.

Regulatory photoreceptor which exists in two forms that are reversibly interconvertible by light: the Pr form that absorbs maximally in the red region of the spectrum and the Pfr form that absorbs maximally in the far-red region. Photoconversion of Pr to Pfr induces an array of morphogenic responses, whereas reconversion of Pfr to Pr cancels the induction of those responses. Pfr controls the expression of a number of nuclear genes including those encoding the small subunit of ribulose-bisphosphate carboxylase, chlorophyll A/B binding protein, protochlorophyllide reductase, rRNA, etc. It also controls the expression of its own gene(s) in a negative feedback fashion. The polypeptide is Phytochrome A (PHYA1) (Zea mays (Maize)).